We begin with the raw amino-acid sequence, 202 residues long: Syndecan-2 (202 aa).

Residues 1 to 18 form the signal peptide; the sequence is MQRAWILLTLGLMACVSA. The Extracellular segment spans residues 19 to 145; it reads ETRTELTSDK…HSDNLFKRTE (127 aa). Serine 41, serine 55, and serine 57 each carry an O-linked (Xyl...) (glycosaminoglycan) serine glycan. Disordered regions lie at residues 41–63 and 88–118; these read SGVY…DEDI and ETMT…ISEA. Residues 91-103 show a composition bias toward polar residues; it reads TLKTQSITPAQTE. Acidic residues predominate over residues 104-117; sequence SPEETDKEEVDISE. The residue at position 116 (serine 116) is a Phosphoserine. A helical membrane pass occupies residues 146–170; it reads VLAAVIAGGVIGFLFAIFLILLLVY. Topologically, residues 171–202 are cytoplasmic; sequence RMRKKDEGSYDLGERKPSSAAYQKAPTKEFYA. Residues 179–202 form a disordered region; sequence SYDLGERKPSSAAYQKAPTKEFYA. Serine 188 is modified (phosphoserine).

This sequence belongs to the syndecan proteoglycan family. As to quaternary structure, interacts (via cytoplasmic domain) with SARM1. Forms a complex with SDCBP and PDCD6IP. In terms of processing, O-glycosylated; contains both heparan sulfate and chondroitin sulfate. Post-translationally, phosphorylated on serine residues. In terms of tissue distribution, preferential expression in cells of mesenchymal origin.

The protein localises to the membrane. Its function is as follows. Cell surface proteoglycan which regulates dendritic arbor morphogenesis. The polypeptide is Syndecan-2 (Sdc2) (Mus musculus (Mouse)).